We begin with the raw amino-acid sequence, 479 residues long: Phosphoglycerate kinase, glycosomal (479 aa).

(2R)-3-phosphoglycerate contacts are provided by Val23, Asp24, Phe25, Asn26, Arg39, Ser61, His62, Gly64, Arg65, Arg132, His168, and Arg169. Residues Gly214 and Ala215 each contribute to the ADP site. Gly214 contributes to the CDP binding site. 2 residues coordinate AMP: Ala215 and Lys216. Ala215 is a binding site for ATP. Ala215 contacts Mg(2+). Lys216 serves as a coordination point for (2R)-3-phosphoglycerate. Asp219 contributes to the CDP binding site. Asp219 provides a ligand contact to Mg(2+). The ADP site is built by Lys220 and Gly238. AMP is bound at residue Lys220. Residue Lys220 participates in ATP binding. Gly238 contributes to the CDP binding site. AMP-binding residues include Ala239 and Ala311. ATP-binding residues include Ala239 and Ala311. ADP contacts are provided by Ala311 and Asn335. Residues Gly336 and Phe341 each coordinate CDP. Residues Phe341, Glu342, Asp374, and Ser375 each coordinate ADP. Glu342 is a binding site for AMP. Glu342, Asp374, and Ser375 together coordinate ATP. Mg(2+) is bound at residue Asp374.

Belongs to the phosphoglycerate kinase family. Monomer. The cofactor is Mg(2+).

It is found in the glycosome. The enzyme catalyses (2R)-3-phosphoglycerate + ATP = (2R)-3-phospho-glyceroyl phosphate + ADP. It functions in the pathway carbohydrate degradation; glycolysis; pyruvate from D-glyceraldehyde 3-phosphate: step 2/5. This Leishmania major protein is Phosphoglycerate kinase, glycosomal (PGKC).